The sequence spans 264 residues: Endochitinase At2g43590 (264 aa).

Residues 1–24 form the signal peptide; the sequence is MAFTKISLVLLLCLLGFFSETVKS. The region spanning 25 to 59 is the Chitin-binding type-1 domain; sequence QNCGCAPNLCCSQFGYCGTDDAYCGVGCRSGPCRG. 4 disulfide bridges follow: C27/C35, C29/C41, C34/C48, and C52/C57. The interval 66-264 is catalytic; that stretch reads GSVGSIVTQG…GVDPGPNLSC (199 aa). E128 serves as the catalytic Proton donor. Residue N261 is glycosylated (N-linked (GlcNAc...) asparagine).

The protein belongs to the glycosyl hydrolase 19 family. Chitinase class I subfamily.

The enzyme catalyses Random endo-hydrolysis of N-acetyl-beta-D-glucosaminide (1-&gt;4)-beta-linkages in chitin and chitodextrins.. This Arabidopsis thaliana (Mouse-ear cress) protein is Endochitinase At2g43590.